A 468-amino-acid polypeptide reads, in one-letter code: Ribulose bisphosphate carboxylase large chain (468 aa).

Lysine 5 carries the post-translational modification N6,N6,N6-trimethyllysine. The substrate site is built by asparagine 114 and threonine 164. The Proton acceptor role is filled by lysine 166. Lysine 168 is a substrate binding site. 3 residues coordinate Mg(2+): lysine 192, aspartate 194, and glutamate 195. Lysine 192 carries the N6-carboxylysine modification. The active-site Proton acceptor is histidine 285. Residues arginine 286, histidine 318, and serine 370 each coordinate substrate.

It belongs to the RuBisCO large chain family. Type I subfamily. As to quaternary structure, heterohexadecamer of 8 large chains and 8 small chains; disulfide-linked. The disulfide link is formed within the large subunit homodimers. Mg(2+) is required as a cofactor. Post-translationally, the disulfide bond which can form in the large chain dimeric partners within the hexadecamer appears to be associated with oxidative stress and protein turnover.

Its subcellular location is the plastid. The protein localises to the chloroplast. The catalysed reaction is 2 (2R)-3-phosphoglycerate + 2 H(+) = D-ribulose 1,5-bisphosphate + CO2 + H2O. The enzyme catalyses D-ribulose 1,5-bisphosphate + O2 = 2-phosphoglycolate + (2R)-3-phosphoglycerate + 2 H(+). RuBisCO catalyzes two reactions: the carboxylation of D-ribulose 1,5-bisphosphate, the primary event in carbon dioxide fixation, as well as the oxidative fragmentation of the pentose substrate in the photorespiration process. Both reactions occur simultaneously and in competition at the same active site. The sequence is that of Ribulose bisphosphate carboxylase large chain from Catesbaea spinosa.